Consider the following 361-residue polypeptide: Phosphoserine aminotransferase (361 aa).

R42 is an L-glutamate binding site. Pyridoxal 5'-phosphate-binding positions include A76–R77, W102, T153, D173, and Q196. Position 197 is an N6-(pyridoxal phosphate)lysine (K197). N238–T239 is a pyridoxal 5'-phosphate binding site.

It belongs to the class-V pyridoxal-phosphate-dependent aminotransferase family. SerC subfamily. Homodimer. The cofactor is pyridoxal 5'-phosphate.

The protein localises to the cytoplasm. The catalysed reaction is O-phospho-L-serine + 2-oxoglutarate = 3-phosphooxypyruvate + L-glutamate. The enzyme catalyses 4-(phosphooxy)-L-threonine + 2-oxoglutarate = (R)-3-hydroxy-2-oxo-4-phosphooxybutanoate + L-glutamate. Its pathway is amino-acid biosynthesis; L-serine biosynthesis; L-serine from 3-phospho-D-glycerate: step 2/3. It functions in the pathway cofactor biosynthesis; pyridoxine 5'-phosphate biosynthesis; pyridoxine 5'-phosphate from D-erythrose 4-phosphate: step 3/5. Its function is as follows. Catalyzes the reversible conversion of 3-phosphohydroxypyruvate to phosphoserine and of 3-hydroxy-2-oxo-4-phosphonooxybutanoate to phosphohydroxythreonine. The chain is Phosphoserine aminotransferase from Pectobacterium carotovorum subsp. carotovorum (strain PC1).